The primary structure comprises 701 residues: Ribosomal RNA large subunit methyltransferase K/L (701 aa).

One can recognise a THUMP domain in the interval 44 to 155 (QAYKICLWSR…SDKLTVYLDL (112 aa)).

This sequence belongs to the methyltransferase superfamily. RlmKL family.

It localises to the cytoplasm. The enzyme catalyses guanosine(2445) in 23S rRNA + S-adenosyl-L-methionine = N(2)-methylguanosine(2445) in 23S rRNA + S-adenosyl-L-homocysteine + H(+). It catalyses the reaction guanosine(2069) in 23S rRNA + S-adenosyl-L-methionine = N(2)-methylguanosine(2069) in 23S rRNA + S-adenosyl-L-homocysteine + H(+). Its function is as follows. Specifically methylates the guanine in position 2445 (m2G2445) and the guanine in position 2069 (m7G2069) of 23S rRNA. This chain is Ribosomal RNA large subunit methyltransferase K/L, found in Pseudoalteromonas atlantica (strain T6c / ATCC BAA-1087).